Here is a 628-residue protein sequence, read N- to C-terminus: Biosynthetic arginine decarboxylase (628 aa).

K99 carries the N6-(pyridoxal phosphate)lysine modification. V279–Y289 is a binding site for substrate.

The protein belongs to the Orn/Lys/Arg decarboxylase class-II family. SpeA subfamily. The cofactor is Mg(2+). Pyridoxal 5'-phosphate serves as cofactor.

It catalyses the reaction L-arginine + H(+) = agmatine + CO2. It participates in amine and polyamine biosynthesis; agmatine biosynthesis; agmatine from L-arginine: step 1/1. Functionally, catalyzes the biosynthesis of agmatine from arginine. The polypeptide is Biosynthetic arginine decarboxylase (Xylella fastidiosa (strain M12)).